A 414-amino-acid chain; its full sequence is Membrane protein UL43 (414 aa).

6 helical membrane passes run 39-59 (GFAH…VVLS), 61-81 (GPYA…LGFL), 96-116 (AWLR…GEAG), 121-141 (VPGP…LLVL), 148-168 (LFLL…VGGL), and 184-204 (AAAL…GDSF). The disordered stretch occupies residues 225–253 (PRYAPEDAERPTDHGPLLPSTHHQRSPRV). Over residues 228-237 (APEDAERPTD) the composition is skewed to basic and acidic residues. A run of 2 helical transmembrane segments spans residues 339–359 (GLMF…AVWI) and 383–403 (ATLR…GVLV).

This sequence belongs to the alphaherpesvirinae HHV-1 UL43 family.

The protein localises to the membrane. The chain is Membrane protein UL43 from Homo sapiens (Human).